A 203-amino-acid chain; its full sequence is Small ribosomal subunit protein uS4 (203 aa).

Positions 93-153 (RRFDNVVFRA…PKSKNMSAVS (61 aa)) constitute an S4 RNA-binding domain.

It belongs to the universal ribosomal protein uS4 family. In terms of assembly, part of the 30S ribosomal subunit. Contacts protein S5. The interaction surface between S4 and S5 is involved in control of translational fidelity.

Its function is as follows. One of the primary rRNA binding proteins, it binds directly to 16S rRNA where it nucleates assembly of the body of the 30S subunit. Functionally, with S5 and S12 plays an important role in translational accuracy. In Chlorobium phaeovibrioides (strain DSM 265 / 1930) (Prosthecochloris vibrioformis (strain DSM 265)), this protein is Small ribosomal subunit protein uS4.